We begin with the raw amino-acid sequence, 183 residues long: ATP synthase subunit b, chloroplastic (183 aa).

The chain crosses the membrane as a helical span at residues 28 to 48 (DIFEANVINILLLLFGLIYVL).

The protein belongs to the ATPase B chain family. F-type ATPases have 2 components, F(1) - the catalytic core - and F(0) - the membrane proton channel. F(1) has five subunits: alpha(3), beta(3), gamma(1), delta(1), epsilon(1). F(0) has four main subunits: a(1), b(1), b'(1) and c(10-14). The alpha and beta chains form an alternating ring which encloses part of the gamma chain. F(1) is attached to F(0) by a central stalk formed by the gamma and epsilon chains, while a peripheral stalk is formed by the delta, b and b' chains.

The protein resides in the plastid. Its subcellular location is the chloroplast thylakoid membrane. In terms of biological role, f(1)F(0) ATP synthase produces ATP from ADP in the presence of a proton or sodium gradient. F-type ATPases consist of two structural domains, F(1) containing the extramembraneous catalytic core and F(0) containing the membrane proton channel, linked together by a central stalk and a peripheral stalk. During catalysis, ATP synthesis in the catalytic domain of F(1) is coupled via a rotary mechanism of the central stalk subunits to proton translocation. Functionally, component of the F(0) channel, it forms part of the peripheral stalk, linking F(1) to F(0). The sequence is that of ATP synthase subunit b, chloroplastic from Porphyra purpurea (Red seaweed).